A 154-amino-acid chain; its full sequence is SsrA-binding protein (154 aa).

It belongs to the SmpB family.

The protein resides in the cytoplasm. Its function is as follows. Required for rescue of stalled ribosomes mediated by trans-translation. Binds to transfer-messenger RNA (tmRNA), required for stable association of tmRNA with ribosomes. tmRNA and SmpB together mimic tRNA shape, replacing the anticodon stem-loop with SmpB. tmRNA is encoded by the ssrA gene; the 2 termini fold to resemble tRNA(Ala) and it encodes a 'tag peptide', a short internal open reading frame. During trans-translation Ala-aminoacylated tmRNA acts like a tRNA, entering the A-site of stalled ribosomes, displacing the stalled mRNA. The ribosome then switches to translate the ORF on the tmRNA; the nascent peptide is terminated with the 'tag peptide' encoded by the tmRNA and targeted for degradation. The ribosome is freed to recommence translation, which seems to be the essential function of trans-translation. The sequence is that of SsrA-binding protein from Treponema pallidum (strain Nichols).